The sequence spans 363 residues: MSDISPDYPTLQSIGWPWPGPPEEAAWKAVFAAHPQALPARVVEQHRTGYVVADTPEASLKAESLPEWQRPRFPSHERAAVGDWVLMEGKRIVALLPRRTSIKRGAAGAHYHQQVIAANIDTVFIVCGLDADFNPRRIERYLLLVGGGGAQPVVVLTKADQTEHAEDALAVLEELEAQNIPLRAVNAKDPASVAALRPWLGDGRTAVLVGSSGAGKSTLTNTLLGTEKMKTNGVRENDSRGRHTTTHRALIPLPSGACLIDTPGMRELKPTGEEDLAEGGFSDVEALAAQCRFNDCAHIAEPGCAVRAAIEADLLDPERVANYMKLRVEVASAAEKLATRVAQNNRGKGSGKRPASIDRPGRR.

Positions 112 to 268 (HQQVIAANID…LIDTPGMREL (157 aa)) constitute a CP-type G domain. GTP contacts are provided by residues 157-160 (TKAD) and 210-218 (GSSGAGKST). Zn(2+) contacts are provided by C291, C296, H298, and C304. The interval 340 to 363 (RVAQNNRGKGSGKRPASIDRPGRR) is disordered.

The protein belongs to the TRAFAC class YlqF/YawG GTPase family. RsgA subfamily. As to quaternary structure, monomer. Associates with 30S ribosomal subunit, binds 16S rRNA. Zn(2+) serves as cofactor.

It localises to the cytoplasm. Functionally, one of several proteins that assist in the late maturation steps of the functional core of the 30S ribosomal subunit. Helps release RbfA from mature subunits. May play a role in the assembly of ribosomal proteins into the subunit. Circularly permuted GTPase that catalyzes slow GTP hydrolysis, GTPase activity is stimulated by the 30S ribosomal subunit. The sequence is that of Small ribosomal subunit biogenesis GTPase RsgA from Xanthomonas oryzae pv. oryzae (strain MAFF 311018).